The following is a 122-amino-acid chain: Small ribosomal subunit protein uS13 (122 aa).

The span at 95–116 (GLPVRGQKTKTNARTRKGRRKT) shows a compositional bias: basic residues. Positions 95-122 (GLPVRGQKTKTNARTRKGRRKTVGAATK) are disordered.

This sequence belongs to the universal ribosomal protein uS13 family. Part of the 30S ribosomal subunit. Forms a loose heterodimer with protein S19. Forms two bridges to the 50S subunit in the 70S ribosome.

In terms of biological role, located at the top of the head of the 30S subunit, it contacts several helices of the 16S rRNA. In the 70S ribosome it contacts the 23S rRNA (bridge B1a) and protein L5 of the 50S subunit (bridge B1b), connecting the 2 subunits; these bridges are implicated in subunit movement. Contacts the tRNAs in the A and P-sites. The protein is Small ribosomal subunit protein uS13 of Campylobacter curvus (strain 525.92).